Here is a 302-residue protein sequence, read N- to C-terminus: TATA-box-binding protein (302 aa).

Disordered regions lie at residues 1 to 22 (MEQN…GAMT) and 50 to 81 (SLLE…QTPQ). Over residues 50-70 (SLLEEQQRQQQQQQAASQQQG) the composition is skewed to low complexity. Tandem repeats lie at residues 128–204 (LQNI…ARVV) and 218–295 (IQNM…YPIL).

Belongs to the TBP family. In terms of tissue distribution, enriched in testis but hardly detectable in the ovary (at protein level).

It localises to the nucleus. General transcription factor that functions at the core of the DNA-binding multiprotein factor TFIID. Binding of TFIID to the TATA box is the initial transcriptional step of the pre-initiation complex (PIC), playing a role in the activation of eukaryotic genes transcribed by RNA polymerase II. Members of the TBP family are differentially required for transcription and development during early embryogenesis. Regulates mRNA levels in the early embryo by both transcriptional and post-transcriptional mechanisms. Required for transcription of a subset of genes at the mid-blastula transition (MBT). Negatively regulates the expression of other embryonic genes, including autoregulation of the tbp promoter itself. Also functions within a transcription-dependent mechanism to direct the temporally-regulated degradation of a subset of maternal mRNAs after the MBT. This is part of a general mechanism to regulate the maternal to zygotic transition and is required for normal embryonic development. Binds to promoters of a subset of genes. Required for gastrulation. This Danio rerio (Zebrafish) protein is TATA-box-binding protein.